The following is a 226-amino-acid chain: Ribonuclease 3 (226 aa).

Residues 6-128 (INRLQRKLGY…LIGGVFLDSN (123 aa)) enclose the RNase III domain. A Mg(2+)-binding site is contributed by glutamate 41. Residue aspartate 45 is part of the active site. Residues aspartate 114 and glutamate 117 each contribute to the Mg(2+) site. Glutamate 117 is an active-site residue. Positions 155–225 (DPKTRLQEYL…AEQALKKLEL (71 aa)) constitute a DRBM domain.

This sequence belongs to the ribonuclease III family. In terms of assembly, homodimer. The cofactor is Mg(2+).

The protein resides in the cytoplasm. It catalyses the reaction Endonucleolytic cleavage to 5'-phosphomonoester.. Digests double-stranded RNA. Involved in the processing of primary rRNA transcript to yield the immediate precursors to the large and small rRNAs (23S and 16S). Processes some mRNAs, and tRNAs when they are encoded in the rRNA operon. Processes pre-crRNA and tracrRNA of type II CRISPR loci if present in the organism. This Salmonella typhi protein is Ribonuclease 3.